The chain runs to 193 residues: Holliday junction branch migration complex subunit RuvA (193 aa).

Residues 1–64 are domain I; it reads MIGRIAGTLI…EDAHLLYGFG (64 aa). Positions 65 to 143 are domain II; that stretch reads SAAERNTFRE…AELGHAPGAA (79 aa). Residues 144–151 are flexible linker; sequence PVHDSAVD. Residues 151-193 form a domain III region; the sequence is DILNALLALGYSEKEAATAIKQVPAGTGVSDGIKLALKALSKA.

Belongs to the RuvA family. Homotetramer. Forms an RuvA(8)-RuvB(12)-Holliday junction (HJ) complex. HJ DNA is sandwiched between 2 RuvA tetramers; dsDNA enters through RuvA and exits via RuvB. An RuvB hexamer assembles on each DNA strand where it exits the tetramer. Each RuvB hexamer is contacted by two RuvA subunits (via domain III) on 2 adjacent RuvB subunits; this complex drives branch migration. In the full resolvosome a probable DNA-RuvA(4)-RuvB(12)-RuvC(2) complex forms which resolves the HJ.

Its subcellular location is the cytoplasm. Functionally, the RuvA-RuvB-RuvC complex processes Holliday junction (HJ) DNA during genetic recombination and DNA repair, while the RuvA-RuvB complex plays an important role in the rescue of blocked DNA replication forks via replication fork reversal (RFR). RuvA specifically binds to HJ cruciform DNA, conferring on it an open structure. The RuvB hexamer acts as an ATP-dependent pump, pulling dsDNA into and through the RuvAB complex. HJ branch migration allows RuvC to scan DNA until it finds its consensus sequence, where it cleaves and resolves the cruciform DNA. This Cupriavidus pinatubonensis (strain JMP 134 / LMG 1197) (Cupriavidus necator (strain JMP 134)) protein is Holliday junction branch migration complex subunit RuvA.